Here is a 94-residue protein sequence, read N- to C-terminus: Protein RESPONSE TO LOW SULFUR 1 (94 aa).

Positions 8–35 form a coiled coil; that stretch reads VTVAAEEMDELRRRNIELSREVAEMKTE.

The sequence is that of Protein RESPONSE TO LOW SULFUR 1 from Arabidopsis thaliana (Mouse-ear cress).